Here is a 780-residue protein sequence, read N- to C-terminus: Myosin heavy chain kinase C (780 aa).

In terms of domain architecture, Alpha-type protein kinase spans 40–243 (IGDDLKPKWT…VCDFLKLKPI (204 aa)). A disordered region spans residues 310–495 (RIRAQQQQKS…MEQTPDRSEF (186 aa)). Low complexity predominate over residues 337-350 (QQSPSSPTSKPVPQ). The span at 353 to 376 (KTPSQSNVVNKSPVSPPKENSNVK) shows a compositional bias: polar residues. The span at 380–436 (DNINNNNSSISSNNDNSNNNNNNNDNINNSSNSSSVNSNSSSVSSSSSSSSSSSSSS) shows a compositional bias: low complexity. Polar residues predominate over residues 437-450 (TTNAAPISIQVSRN). The segment covering 458-488 (IQPSSAAASASSTSSSNVPTPESTSTSSMEQ) has biased composition (low complexity). 6 WD repeats span residues 507–546 (DTVRGLQSECITGDSLRLYSGSNDGQIGVWDAVELKHVTN), 549–589 (AHGK…TIKE), 591–628 (KESNEVNTIFIQDNLLYTGCNDKTVKVWDMRSYECVKT), 631–668 (GHTRAIKSVCAMGNLLFSGSNDQQIYVWNLATGTILTN), 671–708 (GHEGWVKTLYAHNNMLYSGSHDETIRIWDLKTTRCVNT), and 748–780 (NTRSSILCLWRNQNQLFTGSLASNLKVWSWDKM).

Belongs to the protein kinase superfamily. Alpha-type protein kinase family. ALPK subfamily. Interacts with myosin II heavy chain (mhcA). Post-translationally, autophosphorylated in vitro.

The protein localises to the cytoplasm. It is found in the cell cortex. The protein resides in the membrane. It localises to the cleavage furrow. The enzyme catalyses L-threonyl-[myosin heavy-chain] + ATP = O-phospho-L-threonyl-[myosin heavy-chain] + ADP + H(+). Its function is as follows. Phosphorylates threonine at 'Thr-1823', 'Thr-1833' and 'Thr-2029' in the C-terminal tail region of myosin II heavy chain (mhcA). This phosphorylation is critical in actin-activated ATPase activity of the myosin and regulating the assembly and disassembly of myosin II filament. In vitro, catalytic domain phosphorylates mhcA, myelin basic protein, myosin regulatory light chain, casein and caldesmon. Drives the disassembly of myosin II filaments for efficient cytokinesis and recycling of myosin II that occurs during late cytokinesis. Can be activated in vitro by autophosphorylation. This chain is Myosin heavy chain kinase C (mhkC), found in Dictyostelium discoideum (Social amoeba).